The primary structure comprises 150 residues: Ribonuclease H (150 aa).

One can recognise an RNase H type-1 domain in the interval E7 to E148. 4 residues coordinate Mg(2+): D16, E54, D76, and D140.

This sequence belongs to the RNase H family. Monomer. Requires Mg(2+) as cofactor.

It localises to the cytoplasm. It carries out the reaction Endonucleolytic cleavage to 5'-phosphomonoester.. Endonuclease that specifically degrades the RNA of RNA-DNA hybrids. The sequence is that of Ribonuclease H from Gluconobacter oxydans (strain 621H) (Gluconobacter suboxydans).